The following is a 461-amino-acid chain: Phosphoglucosamine mutase (461 aa).

Ser107 functions as the Phosphoserine intermediate in the catalytic mechanism. Ser107, Asp254, Asp256, and Asp258 together coordinate Mg(2+). Position 107 is a phosphoserine (Ser107).

The protein belongs to the phosphohexose mutase family. It depends on Mg(2+) as a cofactor. Post-translationally, activated by phosphorylation.

It catalyses the reaction alpha-D-glucosamine 1-phosphate = D-glucosamine 6-phosphate. Catalyzes the conversion of glucosamine-6-phosphate to glucosamine-1-phosphate. This Bifidobacterium longum subsp. infantis (strain ATCC 15697 / DSM 20088 / JCM 1222 / NCTC 11817 / S12) protein is Phosphoglucosamine mutase.